A 712-amino-acid polypeptide reads, in one-letter code: Polyribonucleotide nucleotidyltransferase (712 aa).

Residues Asp485 and Asp491 each coordinate Mg(2+). The region spanning 552-615 is the KH domain; that stretch reads PRIHTIKINP…EAIRRIEAIT (64 aa). The region spanning 621-689 is the S1 motif domain; sequence NRIYEGKVVR…RQGRVRLSIK (69 aa).

It belongs to the polyribonucleotide nucleotidyltransferase family. As to quaternary structure, component of the RNA degradosome, which is a multiprotein complex involved in RNA processing and mRNA degradation. Requires Mg(2+) as cofactor.

Its subcellular location is the cytoplasm. The enzyme catalyses RNA(n+1) + phosphate = RNA(n) + a ribonucleoside 5'-diphosphate. Functionally, involved in mRNA degradation. Catalyzes the phosphorolysis of single-stranded polyribonucleotides processively in the 3'- to 5'-direction. In Aeromonas hydrophila subsp. hydrophila (strain ATCC 7966 / DSM 30187 / BCRC 13018 / CCUG 14551 / JCM 1027 / KCTC 2358 / NCIMB 9240 / NCTC 8049), this protein is Polyribonucleotide nucleotidyltransferase.